Consider the following 314-residue polypeptide: 4-hydroxy-3-methylbut-2-enyl diphosphate reductase (314 aa).

Residue Cys-12 coordinates [4Fe-4S] cluster. His-41 and His-74 together coordinate (2E)-4-hydroxy-3-methylbut-2-enyl diphosphate. 2 residues coordinate dimethylallyl diphosphate: His-41 and His-74. 2 residues coordinate isopentenyl diphosphate: His-41 and His-74. A [4Fe-4S] cluster-binding site is contributed by Cys-96. His-124 serves as a coordination point for (2E)-4-hydroxy-3-methylbut-2-enyl diphosphate. His-124 is a binding site for dimethylallyl diphosphate. His-124 provides a ligand contact to isopentenyl diphosphate. Glu-126 serves as the catalytic Proton donor. Position 167 (Thr-167) interacts with (2E)-4-hydroxy-3-methylbut-2-enyl diphosphate. [4Fe-4S] cluster is bound at residue Cys-197. Positions 225, 226, 227, and 269 each coordinate (2E)-4-hydroxy-3-methylbut-2-enyl diphosphate. Residues Ser-225, Ser-226, Asn-227, and Ser-269 each contribute to the dimethylallyl diphosphate site. Ser-225, Ser-226, Asn-227, and Ser-269 together coordinate isopentenyl diphosphate.

The protein belongs to the IspH family. The cofactor is [4Fe-4S] cluster.

It catalyses the reaction isopentenyl diphosphate + 2 oxidized [2Fe-2S]-[ferredoxin] + H2O = (2E)-4-hydroxy-3-methylbut-2-enyl diphosphate + 2 reduced [2Fe-2S]-[ferredoxin] + 2 H(+). The enzyme catalyses dimethylallyl diphosphate + 2 oxidized [2Fe-2S]-[ferredoxin] + H2O = (2E)-4-hydroxy-3-methylbut-2-enyl diphosphate + 2 reduced [2Fe-2S]-[ferredoxin] + 2 H(+). The protein operates within isoprenoid biosynthesis; dimethylallyl diphosphate biosynthesis; dimethylallyl diphosphate from (2E)-4-hydroxy-3-methylbutenyl diphosphate: step 1/1. Its pathway is isoprenoid biosynthesis; isopentenyl diphosphate biosynthesis via DXP pathway; isopentenyl diphosphate from 1-deoxy-D-xylulose 5-phosphate: step 6/6. In terms of biological role, catalyzes the conversion of 1-hydroxy-2-methyl-2-(E)-butenyl 4-diphosphate (HMBPP) into a mixture of isopentenyl diphosphate (IPP) and dimethylallyl diphosphate (DMAPP). Acts in the terminal step of the DOXP/MEP pathway for isoprenoid precursor biosynthesis. The sequence is that of 4-hydroxy-3-methylbut-2-enyl diphosphate reductase from Psychromonas ingrahamii (strain DSM 17664 / CCUG 51855 / 37).